Reading from the N-terminus, the 451-residue chain is Phosphoglucosamine mutase (451 aa).

The Phosphoserine intermediate role is filled by S107. Residues S107, D246, D248, and D250 each contribute to the Mg(2+) site. S107 carries the post-translational modification Phosphoserine.

Belongs to the phosphohexose mutase family. Requires Mg(2+) as cofactor. Activated by phosphorylation.

It carries out the reaction alpha-D-glucosamine 1-phosphate = D-glucosamine 6-phosphate. Its function is as follows. Catalyzes the conversion of glucosamine-6-phosphate to glucosamine-1-phosphate. This is Phosphoglucosamine mutase from Burkholderia ambifaria (strain ATCC BAA-244 / DSM 16087 / CCUG 44356 / LMG 19182 / AMMD) (Burkholderia cepacia (strain AMMD)).